Reading from the N-terminus, the 365-residue chain is Mannitol dehydrogenase (365 aa).

Zn(2+)-binding residues include C50, H72, C103, C106, C109, C117, and C166.

This sequence belongs to the zinc-containing alcohol dehydrogenase family. The cofactor is Zn(2+).

It is found in the cytoplasm. It carries out the reaction D-mannitol + NAD(+) = D-mannose + NADH + H(+). In terms of biological role, oxidizes mannitol to mannose. Provides the initial step by which translocated mannitol is committed to central metabolism and, by regulating mannitol pool size, is important in regulating salt tolerance at the cellular level. The chain is Mannitol dehydrogenase (MTD) from Apium graveolens (Celery).